Reading from the N-terminus, the 478-residue chain is Cytochrome c-552 (478 aa).

An N-terminal signal peptide occupies residues 1–26 (MTRIKINARRIFSLLIPFFFFTSVHA). His94 contacts heme c. Residues Cys122, Cys125, and Lys126 each contribute to the heme site. Heme c contacts are provided by Cys160, Cys163, His164, Cys209, Cys212, and His213. Residues Glu215, Tyr216, Lys261, and Gln263 each contribute to the Ca(2+) site. Tyr216 contributes to the substrate binding site. His264 is a binding site for substrate. Positions 275, 282, 285, 286, 301, 314, 317, 318, and 393 each coordinate heme c.

This sequence belongs to the cytochrome c-552 family. Ca(2+) serves as cofactor. The cofactor is heme c.

The protein localises to the periplasm. The catalysed reaction is 6 Fe(III)-[cytochrome c] + NH4(+) + 2 H2O = 6 Fe(II)-[cytochrome c] + nitrite + 8 H(+). It participates in nitrogen metabolism; nitrate reduction (assimilation). In terms of biological role, catalyzes the reduction of nitrite to ammonia, consuming six electrons in the process. This Escherichia coli O17:K52:H18 (strain UMN026 / ExPEC) protein is Cytochrome c-552.